The chain runs to 512 residues: GMP synthase [glutamine-hydrolyzing] (512 aa).

A Glutamine amidotransferase type-1 domain is found at 3 to 196; sequence NILILDFGSQ…VKHICQASET (194 aa). The Nucleophile role is filled by Cys80. Catalysis depends on residues His169 and Glu171. The 191-residue stretch at 197-387 folds into the GMPS ATP-PPase domain; that stretch reads WKIETIEKQL…LGLPDVLISR (191 aa). ATP is bound at residue 225–231; the sequence is SGGVDSS.

As to quaternary structure, homodimer.

It carries out the reaction XMP + L-glutamine + ATP + H2O = GMP + L-glutamate + AMP + diphosphate + 2 H(+). Its pathway is purine metabolism; GMP biosynthesis; GMP from XMP (L-Gln route): step 1/1. In terms of biological role, catalyzes the synthesis of GMP from XMP. The sequence is that of GMP synthase [glutamine-hydrolyzing] from Chlamydia caviae (strain ATCC VR-813 / DSM 19441 / 03DC25 / GPIC) (Chlamydophila caviae).